Consider the following 342-residue polypeptide: MLEEQNSDIERKQDHIEINLKQNVNSTLKSGLASIKFIHNALPEINYDNIDTTTTFLGKYMKAPILISSMTGGTTRAKDINYRLAQAAQKSGIAMGLGSMRILLTKPDTIKTFTVRHVAPDIPLLANIGAVQLNYGVTPKECQYLIDTIKADALILHLNVLHELTQPEGNRNWENLLPKIKEVINYLSVPVIIKEVGYGLSKQVAKKLIKVGVKVLDIAGSGGTSWSQVEAYRAKNSMQNRIASSFINWGITTLDSLKMLREVSKDITLIASGGLQSGIDGAKAIRMGANIFGLAGQLLKAADIAESLVSEEIQLIIEQLKITMLCTGSCTLKDLAKAEIML.

Residue Arg11–Lys12 participates in substrate binding. FMN-binding positions include Ser68, Ser69–Thr71, Ser99, and Asn127. Ser99–Arg101 lines the substrate pocket. Glu163 serves as a coordination point for Mg(2+). FMN is bound by residues Lys194, Thr224, and Ala295–Gly296.

Belongs to the IPP isomerase type 2 family. In terms of assembly, homooctamer. Dimer of tetramers. The cofactor is FMN. NADPH is required as a cofactor. Mg(2+) serves as cofactor.

The protein localises to the cytoplasm. It catalyses the reaction isopentenyl diphosphate = dimethylallyl diphosphate. Its function is as follows. Involved in the biosynthesis of isoprenoids. Catalyzes the 1,3-allylic rearrangement of the homoallylic substrate isopentenyl (IPP) to its allylic isomer, dimethylallyl diphosphate (DMAPP). In Rickettsia typhi (strain ATCC VR-144 / Wilmington), this protein is Isopentenyl-diphosphate delta-isomerase.